The primary structure comprises 389 residues: 1-deoxy-D-xylulose 5-phosphate reductoisomerase (389 aa).

Ser-11, Gly-12, Ser-13, Val-14, Asn-39, and Asn-122 together coordinate NADPH. A 1-deoxy-D-xylulose 5-phosphate-binding site is contributed by Lys-123. Position 124 (Glu-124) interacts with NADPH. Position 148 (Asp-148) interacts with Mn(2+). Residues Ser-149, Glu-150, Ser-174, and His-197 each contribute to the 1-deoxy-D-xylulose 5-phosphate site. Position 150 (Glu-150) interacts with Mn(2+). NADPH is bound at residue Gly-203. 4 residues coordinate 1-deoxy-D-xylulose 5-phosphate: Ser-210, Asn-215, Lys-216, and Glu-219. A Mn(2+)-binding site is contributed by Glu-219.

The protein belongs to the DXR family. Mg(2+) is required as a cofactor. Mn(2+) serves as cofactor.

It carries out the reaction 2-C-methyl-D-erythritol 4-phosphate + NADP(+) = 1-deoxy-D-xylulose 5-phosphate + NADPH + H(+). Its pathway is isoprenoid biosynthesis; isopentenyl diphosphate biosynthesis via DXP pathway; isopentenyl diphosphate from 1-deoxy-D-xylulose 5-phosphate: step 1/6. Catalyzes the NADPH-dependent rearrangement and reduction of 1-deoxy-D-xylulose-5-phosphate (DXP) to 2-C-methyl-D-erythritol 4-phosphate (MEP). The protein is 1-deoxy-D-xylulose 5-phosphate reductoisomerase of Leptospira interrogans serogroup Icterohaemorrhagiae serovar copenhageni (strain Fiocruz L1-130).